Here is a 123-residue protein sequence, read N- to C-terminus: Small ribosomal subunit protein uS12 (123 aa).

3-methylthioaspartic acid is present on D89.

Belongs to the universal ribosomal protein uS12 family. As to quaternary structure, part of the 30S ribosomal subunit. Contacts proteins S8 and S17. May interact with IF1 in the 30S initiation complex.

With S4 and S5 plays an important role in translational accuracy. In terms of biological role, interacts with and stabilizes bases of the 16S rRNA that are involved in tRNA selection in the A site and with the mRNA backbone. Located at the interface of the 30S and 50S subunits, it traverses the body of the 30S subunit contacting proteins on the other side and probably holding the rRNA structure together. The combined cluster of proteins S8, S12 and S17 appears to hold together the shoulder and platform of the 30S subunit. The chain is Small ribosomal subunit protein uS12 from Maridesulfovibrio salexigens (strain ATCC 14822 / DSM 2638 / NCIMB 8403 / VKM B-1763) (Desulfovibrio salexigens).